Reading from the N-terminus, the 216-residue chain is Protein ORM2 (216 aa).

The segment at 1 to 50 (MIDRTKNESPAFEESPLTPNVSNLKPFPSQSNKISTPVTDHRRRRSSSVI) is disordered. The Cytoplasmic segment spans residues 1–78 (MIDRTKNESP…NMNATWVDQR (78 aa)). Phosphoserine is present on residues S9 and S15. Polar residues predominate over residues 17 to 38 (LTPNVSNLKPFPSQSNKISTPV). T18 is subject to Phosphothreonine. Phosphoserine occurs at positions 22, 29, and 51. The helical transmembrane segment at 79 to 99 (GAWLIHIVVIVLLRLFYSLFG) threads the bilayer. At 100–103 (STPK) the chain is on the extracellular side. A helical transmembrane segment spans residues 104–124 (WTWTLTNMTYIIGFYIMFHLV). Residues 125-148 (KGTPFDFNGGAYDNLTMWEQINDE) lie on the Cytoplasmic side of the membrane. A helical transmembrane segment spans residues 149 to 169 (TLYTPTRKFLLIVPIVLFLIS). Residues 170 to 177 (NQYYRNDM) lie on the Extracellular side of the membrane. The helical transmembrane segment at 178–198 (TLFLSNLAVTVLIGVVPKLGI) threads the bilayer. The Cytoplasmic portion of the chain corresponds to 199 to 216 (THRLRISIPGITGRAQIS).

It belongs to the ORM family. Component of the SPOTS complex, at least composed of LCB1/2 (LCB1 and/or LCB2), ORM1/2 (ORM1 and/or ORM2), SAC1 and TSC3. Post-translationally, phosphorylated in case of disruption of sphingolipid synthesis. Phosphorylation regulates the inhibitory activity of serine palmitoyltransferases (LCB1 and LCB2).

The protein resides in the endoplasmic reticulum membrane. Functionally, component of the SPOTS complex that acts as a negative regulator of sphingolipid synthesis. Acts by inhibiting serine palmitoyltransferases (LCB1 and LCB2) activity. Along with ORM1, plays a role in the phosphorylation of LAC1 and YPK1, the distribution of actin patches between mother and daughter cells, and in endocytosis. In Saccharomyces cerevisiae (strain ATCC 204508 / S288c) (Baker's yeast), this protein is Protein ORM2 (ORM2).